The following is a 142-amino-acid chain: Large ribosomal subunit protein uL11 (142 aa).

This sequence belongs to the universal ribosomal protein uL11 family. As to quaternary structure, part of the ribosomal stalk of the 50S ribosomal subunit. Interacts with L10 and the large rRNA to form the base of the stalk. L10 forms an elongated spine to which L12 dimers bind in a sequential fashion forming a multimeric L10(L12)X complex. In terms of processing, one or more lysine residues are methylated.

Its function is as follows. Forms part of the ribosomal stalk which helps the ribosome interact with GTP-bound translation factors. In Akkermansia muciniphila (strain ATCC BAA-835 / DSM 22959 / JCM 33894 / BCRC 81048 / CCUG 64013 / CIP 107961 / Muc), this protein is Large ribosomal subunit protein uL11.